Here is a 514-residue protein sequence, read N- to C-terminus: Maturase K (514 aa).

Belongs to the intron maturase 2 family. MatK subfamily.

The protein localises to the plastid. The protein resides in the chloroplast. Usually encoded in the trnK tRNA gene intron. Probably assists in splicing its own and other chloroplast group II introns. In Phoenix dactylifera (Date palm), this protein is Maturase K.